A 379-amino-acid chain; its full sequence is MTAIRYEFIKTCKQTGARLGRVHTPHGSFDTPTFMPVGTLATVKTMSPEELKAMDSGIILSNTYHLWLRPGHEIVREAGGLHKFMNWDRAILTDSGGFQVFSLSDFRRIEEEGVHFRNHLNGDKLFLSPEKAMEIQNALGSDIMMAFDECPPFPATFEYMKKSVERTSRWAERCLKAHERPQDQGLFGIVQGGEFEELRRQSAKDLVSMDFPGYAVGGLSVGEPKDIMNRVLEFTTPLLPDNKPRYLMGVGSPDSLIDGAIRGIDMFDCVLPTRIARNGTCMTSEGRLVVKNAKFARDFGPLDPNCDCYTCKNYSRAYIRHLMKCDETFGIRLTSYHNLHFLLNLMEQVRQAIREDRLGDFREEFFEQYGFNKPNAKNF.

Catalysis depends on aspartate 94, which acts as the Proton acceptor. Residues 94 to 98 (DSGGF), aspartate 148, glutamine 191, and glycine 218 each bind substrate. The interval 249-255 (GVGSPDS) is RNA binding. Residue aspartate 268 is the Nucleophile of the active site. Positions 273–277 (TRIAR) are RNA binding; important for wobble base 34 recognition. The Zn(2+) site is built by cysteine 306, cysteine 308, cysteine 311, and histidine 337.

It belongs to the queuine tRNA-ribosyltransferase family. Homodimer. Within each dimer, one monomer is responsible for RNA recognition and catalysis, while the other monomer binds to the replacement base PreQ1. Requires Zn(2+) as cofactor.

The catalysed reaction is 7-aminomethyl-7-carbaguanine + guanosine(34) in tRNA = 7-aminomethyl-7-carbaguanosine(34) in tRNA + guanine. It participates in tRNA modification; tRNA-queuosine biosynthesis. Functionally, catalyzes the base-exchange of a guanine (G) residue with the queuine precursor 7-aminomethyl-7-deazaguanine (PreQ1) at position 34 (anticodon wobble position) in tRNAs with GU(N) anticodons (tRNA-Asp, -Asn, -His and -Tyr). Catalysis occurs through a double-displacement mechanism. The nucleophile active site attacks the C1' of nucleotide 34 to detach the guanine base from the RNA, forming a covalent enzyme-RNA intermediate. The proton acceptor active site deprotonates the incoming PreQ1, allowing a nucleophilic attack on the C1' of the ribose to form the product. After dissociation, two additional enzymatic reactions on the tRNA convert PreQ1 to queuine (Q), resulting in the hypermodified nucleoside queuosine (7-(((4,5-cis-dihydroxy-2-cyclopenten-1-yl)amino)methyl)-7-deazaguanosine). The sequence is that of Queuine tRNA-ribosyltransferase from Bacillus cereus (strain Q1).